We begin with the raw amino-acid sequence, 290 residues long: MFKDFFNRGSKKKKYVTVQDSKQNDVPTGIMTKCPKCKKIMYTKELSENLNVCFNCDHHLSLTAYKRIEAISDEGTFKEFDKGMTSANPLDFPGYEEKIKKDQEKTGLDEAVVTGTAELGGIEYGVAVMDARFRMGSMGSVVGEKICRIIDYCTEHRLPFILFSASGGARMQEGIISLMQMGKTSVSLKRHSDAGLLYISYITNPTTGGVSASFASVGDINLSEPKALIGFAGRRVIEQTINEKLPDDFQTAEFLLEHGQLDKVVHRKEMRSTLESILKMHAGQEVNKDA.

The region spanning 30-290 (IMTKCPKCKK…HAGQEVNKDA (261 aa)) is the CoA carboxyltransferase N-terminal domain. Zn(2+)-binding residues include Cys34, Cys37, Cys53, and Cys56. The C4-type zinc-finger motif lies at 34–56 (CPKCKKIMYTKELSENLNVCFNC).

It belongs to the AccD/PCCB family. Acetyl-CoA carboxylase is a heterohexamer composed of biotin carboxyl carrier protein (AccB), biotin carboxylase (AccC) and two subunits each of ACCase subunit alpha (AccA) and ACCase subunit beta (AccD). Zn(2+) is required as a cofactor.

The protein localises to the cytoplasm. It carries out the reaction N(6)-carboxybiotinyl-L-lysyl-[protein] + acetyl-CoA = N(6)-biotinyl-L-lysyl-[protein] + malonyl-CoA. The protein operates within lipid metabolism; malonyl-CoA biosynthesis; malonyl-CoA from acetyl-CoA: step 1/1. In terms of biological role, component of the acetyl coenzyme A carboxylase (ACC) complex. Biotin carboxylase (BC) catalyzes the carboxylation of biotin on its carrier protein (BCCP) and then the CO(2) group is transferred by the transcarboxylase to acetyl-CoA to form malonyl-CoA. This is Acetyl-coenzyme A carboxylase carboxyl transferase subunit beta from Staphylococcus carnosus (strain TM300).